The following is a 577-amino-acid chain: Aspartate--tRNA(Asp/Asn) ligase (577 aa).

E171 is a binding site for L-aspartate. Residues Q195–K198 form an aspartate region. L-aspartate is bound at residue R217. ATP is bound by residues R217–E219 and Q226. H444 contacts L-aspartate. ATP is bound at residue E474. R481 contacts L-aspartate. Position 526–529 (G526–R529) interacts with ATP.

Belongs to the class-II aminoacyl-tRNA synthetase family. Type 1 subfamily. In terms of assembly, homodimer.

Its subcellular location is the cytoplasm. It carries out the reaction tRNA(Asx) + L-aspartate + ATP = L-aspartyl-tRNA(Asx) + AMP + diphosphate. Aspartyl-tRNA synthetase with relaxed tRNA specificity since it is able to aspartylate not only its cognate tRNA(Asp) but also tRNA(Asn). Reaction proceeds in two steps: L-aspartate is first activated by ATP to form Asp-AMP and then transferred to the acceptor end of tRNA(Asp/Asn). This is Aspartate--tRNA(Asp/Asn) ligase from Helicobacter pylori (strain P12).